The sequence spans 228 residues: UPF0758 protein Gura_4138 (228 aa).

The region spanning 106–228 is the MPN domain; sequence RFTSPSQVFE…FLSFVDRGMM (123 aa). The Zn(2+) site is built by His-177, His-179, and Asp-190. Positions 177 to 190 match the JAMM motif motif; that stretch reads HNHPTGDPTPSRED.

This sequence belongs to the UPF0758 family.

This Geotalea uraniireducens (strain Rf4) (Geobacter uraniireducens) protein is UPF0758 protein Gura_4138.